The primary structure comprises 100 residues: Non-histone chromosomal protein HMG-14 (100 aa).

The interval M1–D100 is disordered. S7 is subject to ADP-ribosylserine. S8 bears the Phosphoserine mark. Residue K14 is modified to N6-acetyllysine. S21 carries the post-translational modification Phosphoserine; by RPS6KA5. An ADP-ribosylserine; alternate modification is found at S25. S25 bears the Phosphoserine; alternate; by RPS6KA5 mark. Residue K27 is modified to N6-acetyllysine. 2 stretches are compositionally biased toward basic and acidic residues: residues A30–V50 and E69–E85. A Phosphothreonine modification is found at T81. K82 is modified (N6-acetyllysine). Phosphoserine is present on residues S86, S89, and S99.

Interacts with transcriptional regulator SEHBP. Post-translationally, phosphorylation on Ser-21 and Ser-25 weakens binding to nucleosomes and increases the rate of H3 phosphorylation. Phosphorylation favors cytoplasmic localization.

It localises to the nucleus. The protein resides in the cytoplasm. In terms of biological role, binds to the inner side of the nucleosomal DNA thus altering the interaction between the DNA and the histone octamer. May be involved in the process which maintains transcribable genes in a unique chromatin conformation. Inhibits the phosphorylation of nucleosomal histones H3 and H2A by RPS6KA5/MSK1 and RPS6KA3/RSK2. The sequence is that of Non-histone chromosomal protein HMG-14 (HMGN1) from Homo sapiens (Human).